A 464-amino-acid polypeptide reads, in one-letter code: Asparagine--tRNA ligase (464 aa).

The protein belongs to the class-II aminoacyl-tRNA synthetase family. Homodimer.

The protein resides in the cytoplasm. It catalyses the reaction tRNA(Asn) + L-asparagine + ATP = L-asparaginyl-tRNA(Asn) + AMP + diphosphate + H(+). This is Asparagine--tRNA ligase from Clostridium botulinum (strain Eklund 17B / Type B).